The sequence spans 306 residues: Protoheme IX farnesyltransferase (306 aa).

9 helical membrane-spanning segments follow: residues 32-52, 58-78, 103-123, 126-146, 153-173, 180-200, 227-247, 249-269, and 278-298; these read VVAL…PGAL, IPAM…NHIV, NAIV…YALV, LTAF…TMYL, NITI…TAMT, ALLL…ALAI, ILLY…VGMS, WLYL…AWQL, and AMAT…ILLL.

Belongs to the UbiA prenyltransferase family. Protoheme IX farnesyltransferase subfamily.

Its subcellular location is the cell inner membrane. It carries out the reaction heme b + (2E,6E)-farnesyl diphosphate + H2O = Fe(II)-heme o + diphosphate. It participates in porphyrin-containing compound metabolism; heme O biosynthesis; heme O from protoheme: step 1/1. In terms of biological role, converts heme B (protoheme IX) to heme O by substitution of the vinyl group on carbon 2 of heme B porphyrin ring with a hydroxyethyl farnesyl side group. In Colwellia psychrerythraea (strain 34H / ATCC BAA-681) (Vibrio psychroerythus), this protein is Protoheme IX farnesyltransferase.